A 387-amino-acid polypeptide reads, in one-letter code: 17-beta-hydroxysteroid dehydrogenase type 2 (387 aa).

A helical; Signal-anchor for type II membrane protein membrane pass occupies residues phenylalanine 4–phenylalanine 24. Glutamine 82–alanine 111 provides a ligand contact to NAD(+). A substrate-binding site is contributed by serine 219. Tyrosine 232 is a catalytic residue.

This sequence belongs to the short-chain dehydrogenases/reductases (SDR) family. Homodimer. As to expression, expressed in placenta.

The protein localises to the endoplasmic reticulum membrane. The catalysed reaction is 17beta-estradiol + NAD(+) = estrone + NADH + H(+). It catalyses the reaction testosterone + NAD(+) = androst-4-ene-3,17-dione + NADH + H(+). It carries out the reaction 17beta-hydroxy-5alpha-androstan-3-one + NAD(+) = 5alpha-androstan-3,17-dione + NADH + H(+). The enzyme catalyses (20S)-hydroxypregn-4-en-3-one + NAD(+) = progesterone + NADH + H(+). Functionally, catalyzes the NAD-dependent oxidation of the highly active 17beta-hydroxysteroids, such as estradiol (E2), testosterone (T), and dihydrotestosterone (DHT), to their less active forms and thus regulates the biological potency of these steroids. Oxidizes estradiol to estrone, testosterone to androstenedione, and dihydrotestosterone to 5alpha-androstan-3,17-dione. Also has 20-alpha-HSD activity. In Homo sapiens (Human), this protein is 17-beta-hydroxysteroid dehydrogenase type 2.